Reading from the N-terminus, the 523-residue chain is Sensory neuron membrane protein 1 (523 aa).

The Cytoplasmic segment spans residues 1–10; the sequence is MRLARGIKYA. A helical membrane pass occupies residues 11–31; the sequence is VIGAGVALFGVLFGWVMFPAI. Residues 32–458 are Extracellular-facing; it reads LKSQLKKEMA…NQLFIPKRIV (427 aa). N-linked (GlcNAc...) asparagine glycosylation is found at asparagine 67 and asparagine 229. Disulfide bonds link cysteine 268/cysteine 333, cysteine 297/cysteine 352, and cysteine 335/cysteine 341. Asparagine 440 carries an N-linked (GlcNAc...) asparagine glycan. The chain crosses the membrane as a helical span at residues 459-479; that stretch reads SVIRWWLLSFGMLAALGGVIF. At 480–523 the chain is on the cytoplasmic side; the sequence is HFKDDIMRIAIKGDSSVTKVNPEDGEQKDVSVIGQSHEPPKINM. Positions 499–523 are disordered; the sequence is VNPEDGEQKDVSVIGQSHEPPKINM.

Belongs to the CD36 family. As to expression, localizes to both male and female antennae but not the leg, wing, gut, head, or thoracic ganglia. Detected throughout the sensory epithelium, associating with both sex-pheromone sensilla and plant-volatile sensilla. Differentially expressed both among different sensilla and different neurons within a given sensillum. Expression coincides with that of several other olfactory-specific proteins that are involved in odor detection.

It is found in the cell membrane. Its function is as follows. Plays an olfactory role that is not restricted to pheromone sensitivity. In Manduca sexta (Tobacco hawkmoth), this protein is Sensory neuron membrane protein 1.